The following is a 426-amino-acid chain: 3-phosphoshikimate 1-carboxyvinyltransferase (426 aa).

Lysine 22, serine 23, and arginine 27 together coordinate 3-phosphoshikimate. Residue lysine 22 coordinates phosphoenolpyruvate. Phosphoenolpyruvate contacts are provided by glycine 96 and arginine 124. 3-phosphoshikimate is bound by residues serine 170, serine 171, glutamine 172, serine 198, aspartate 314, asparagine 337, and lysine 341. Phosphoenolpyruvate is bound at residue glutamine 172. Catalysis depends on aspartate 314, which acts as the Proton acceptor. Phosphoenolpyruvate-binding residues include arginine 345, arginine 387, and lysine 412.

Belongs to the EPSP synthase family. In terms of assembly, monomer.

It localises to the cytoplasm. The catalysed reaction is 3-phosphoshikimate + phosphoenolpyruvate = 5-O-(1-carboxyvinyl)-3-phosphoshikimate + phosphate. It participates in metabolic intermediate biosynthesis; chorismate biosynthesis; chorismate from D-erythrose 4-phosphate and phosphoenolpyruvate: step 6/7. Functionally, catalyzes the transfer of the enolpyruvyl moiety of phosphoenolpyruvate (PEP) to the 5-hydroxyl of shikimate-3-phosphate (S3P) to produce enolpyruvyl shikimate-3-phosphate and inorganic phosphate. The protein is 3-phosphoshikimate 1-carboxyvinyltransferase of Shewanella sp. (strain MR-7).